A 46-amino-acid polypeptide reads, in one-letter code: uncharacterized protein (46 aa).

Positions 1–46 (MEVTPLETGRARSHQKASTAAQPHAADEKMTGSTARRYLSQDHQSV) are disordered.

This is an uncharacterized protein from Treponema pallidum (strain Nichols).